The chain runs to 1004 residues: BLOC-2 complex member HPS3 (1004 aa).

The short motif at 172 to 176 is the Clathrin-binding element; sequence LLDFE.

In terms of assembly, component of the biogenesis of lysosome-related organelles complex-2 (or BLOC2) composed of HPS3, HPS5 and HPS6. Interacts with HPS5. Interacts with HPS6. As to expression, widely expressed. Higher levels of expression are observed in kidney, liver and placenta.

It is found in the cytoplasm. It localises to the cytosol. In terms of biological role, involved in early stages of melanosome biogenesis and maturation. The sequence is that of BLOC-2 complex member HPS3 (HPS3) from Homo sapiens (Human).